Reading from the N-terminus, the 306-residue chain is Tyrosine recombinase XerC (306 aa).

The Core-binding (CB) domain maps to 1–85 (MQQQLEQFLA…AIKSFFEYLQ (85 aa)). Residues 106–289 (FLPKAITVAQ…SNDRAVKYDQ (184 aa)) form the Tyr recombinase domain. Active-site residues include R147, K171, H241, R244, and H267. Residue Y276 is the O-(3'-phospho-DNA)-tyrosine intermediate of the active site.

It belongs to the 'phage' integrase family. XerC subfamily. In terms of assembly, forms a cyclic heterotetrameric complex composed of two molecules of XerC and two molecules of XerD.

It is found in the cytoplasm. Functionally, site-specific tyrosine recombinase, which acts by catalyzing the cutting and rejoining of the recombining DNA molecules. The XerC-XerD complex is essential to convert dimers of the bacterial chromosome into monomers to permit their segregation at cell division. It also contributes to the segregational stability of plasmids. This Herpetosiphon aurantiacus (strain ATCC 23779 / DSM 785 / 114-95) protein is Tyrosine recombinase XerC.